A 449-amino-acid chain; its full sequence is Packaging protein 1 (449 aa).

Residues 1-10 are compositionally biased toward basic residues; it reads MESRGKHRLK. A disordered region spans residues 1 to 64; that stretch reads MESRGKHRLK…SSNSILHCPP (64 aa). A compositionally biased stretch (basic and acidic residues) spans 11–25; the sequence is KNGESKENLGEHEQA. Polar residues predominate over residues 35–59; sequence SADSLSSPVAEPNFSSPGGRSSNSI. 168 to 175 contributes to the ATP binding site; the sequence is GPTGSGKS. Positions 437–449 are DNA-binding; the sequence is TAYSKKCDKLANK.

It belongs to the adenoviridae packaging protein 1 family. Homodimer. Part of a genome packaging complex composed of packaging proteins 1, 2 and 3; this complex specifically binds to the packaging sequence on the left end of viral genomic DNA and performs packaging of the viral genome. Interacts with protein 33K.

The protein resides in the virion. It is found in the host nucleus. It localises to the host nucleoplasm. Its subcellular location is the host nucleolus. Component of the packaging machinery which encapsidates the viral DNA into preformed capsids and transcriptional activator of the viral major late promoter (MLP). Binds, along with packaging proteins 2 and 3, to the specific packaging sequence on the left end of viral genomic DNA and displays ATPase activity thereby providing the power stroke of the packaging machinery. The activity of packaging protein IVa2 is stimulated by protein 33K which acts as a terminase. May be the protein that pumps DNA into the capsid powered by ATP hydrolysis. Specifically binds to the 5'-CG-3' nucleotides of the repeats making up the packaging sequence. Component of the DEF-A and DEF-B transcription factors that bind downstream elements of the major late promoter (MLP), and stimulate transcription from the MLP after initiation of viral DNA replication. DEF-A is a heterodimer packaging proteins 1 and 2 and DEF-B is a homodimer of packaging protein 1. This is Packaging protein 1 from Mus musculus (Mouse).